Consider the following 94-residue polypeptide: Acylphosphatase (94 aa).

The Acylphosphatase-like domain maps to 3–90; sequence RVHVIVEGRV…PDEKQFRIMY (88 aa). Residues Arg18 and Asn36 contribute to the active site.

The protein belongs to the acylphosphatase family.

It carries out the reaction an acyl phosphate + H2O = a carboxylate + phosphate + H(+). The polypeptide is Acylphosphatase (acyP) (Geobacillus thermodenitrificans (strain NG80-2)).